Reading from the N-terminus, the 189-residue chain is HGPRTase-like protein 2 (189 aa).

It belongs to the purine/pyrimidine phosphoribosyltransferase family. Archaeal HPRT subfamily.

In terms of biological role, may catalyze a purine salvage reaction, the substrate is unknown. This is HGPRTase-like protein 2 from Halalkalicoccus jeotgali (strain DSM 18796 / CECT 7217 / JCM 14584 / KCTC 4019 / B3).